Here is a 1007-residue protein sequence, read N- to C-terminus: Glutamate receptor ionotropic, delta-2 (1007 aa).

The N-terminal stretch at methionine 1–serine 23 is a signal peptide. An interaction with CBLN1 homotrimer region spans residues aspartate 24–arginine 345. Topologically, residues aspartate 24–aspartate 566 are extracellular. Disulfide bonds link cysteine 83–cysteine 355, cysteine 99–cysteine 131, and cysteine 298–cysteine 310. Asparagine 293 carries an N-linked (GlcNAc...) asparagine glycan. Asparagine 426 is a glycosylation site (N-linked (GlcNAc...) asparagine). A helical membrane pass occupies residues leucine 567–leucine 587. Residues asparagine 588–glycine 635 lie on the Cytoplasmic side of the membrane. Residues alanine 636–leucine 656 form a helical membrane-spanning segment. Residues threonine 657 to serine 830 are Extracellular-facing. Asparagine 713 and asparagine 716 each carry an N-linked (GlcNAc...) asparagine glycan. A helical membrane pass occupies residues leucine 831 to leucine 851. Over glutamate 852–isoleucine 1007 the chain is Cytoplasmic. Serine 883 is subject to Phosphoserine. Residue threonine 886 is modified to Phosphothreonine. Serine 890 carries the post-translational modification Phosphoserine. Positions aspartate 921–proline 991 are interaction with AP4M1. A PDZ-binding motif is present at residues threonine 1005–isoleucine 1007. Phosphoserine is present on serine 1006.

Belongs to the glutamate-gated ion channel (TC 1.A.10.1) family. GRID2 subfamily. As to quaternary structure, tetramer; dimer of dimers. Interacts with AP4M1. Interacts with EML2. Interacts with MAGI2 (via PDZ domains). Interacts with BECN1, GOPC, GRID2IP, SHANK1 and SHANK2. Interacts with CBLN2, but not with CBLN4. Interacts with CBLN1 (via C1q domain); the interaction is CBLN1-NRX1 complex formation-dependent; CBLN1-binding is calcium-independent; CBLN1 hexamers anchor GRID2 N-terminal domain dimers to monomeric NRXN1 isoform beta; promotes synaptogenesis and mediates the D-Serine-dependent long term depression signals and AMPA receptor endocytosis. In terms of tissue distribution, expressed at high levels in the cerebellar Purkinje cell layer, almost absent in the forebrain.

The protein localises to the postsynaptic cell membrane. It catalyses the reaction Ca(2+)(in) = Ca(2+)(out). The catalysed reaction is Na(+)(in) = Na(+)(out). In terms of biological role, member of the ionotropic glutamate receptor family, which plays a crucial role in synaptic organization and signal transduction in the central nervous system. Although it shares structural features with ionotropic glutamate receptors, does not bind glutamate as a primary ligand. Promotes synaptogenesis and mediates the D-Serine-dependent long term depression signals and AMPA receptor endocytosis of cerebellar parallel fiber-Purkinje cell (PF-PC) synapses through the NRX1B-CBLN1-GRID2 triad complex. In the presence of neurexins and cerebellins, forms cation-selective channels that are proposed to be gated by glycine and D-serine. However, recent research disputes this ligand-gated cation channel activity. Cation-selective ion channel activity can be triggered by GRM1 in Purkinje cells. The chain is Glutamate receptor ionotropic, delta-2 (Grid2) from Rattus norvegicus (Rat).